The primary structure comprises 132 residues: Ribosome-binding factor A (132 aa).

It belongs to the RbfA family. Monomer. Binds 30S ribosomal subunits, but not 50S ribosomal subunits or 70S ribosomes.

Its subcellular location is the cytoplasm. Its function is as follows. One of several proteins that assist in the late maturation steps of the functional core of the 30S ribosomal subunit. Associates with free 30S ribosomal subunits (but not with 30S subunits that are part of 70S ribosomes or polysomes). Required for efficient processing of 16S rRNA. May interact with the 5'-terminal helix region of 16S rRNA. In Teredinibacter turnerae (strain ATCC 39867 / T7901), this protein is Ribosome-binding factor A.